Here is a 168-residue protein sequence, read N- to C-terminus: G/U mismatch-specific DNA glycosylase (168 aa).

The protein belongs to the uracil-DNA glycosylase (UDG) superfamily. TDG/mug family. In terms of assembly, binds DNA as a monomer.

Its subcellular location is the cytoplasm. It catalyses the reaction Specifically hydrolyzes mismatched double-stranded DNA and polynucleotides, releasing free uracil.. Excises ethenocytosine and uracil, which can arise by alkylation or deamination of cytosine, respectively, from the corresponding mispairs with guanine in ds-DNA. It is capable of hydrolyzing the carbon-nitrogen bond between the sugar-phosphate backbone of the DNA and the mispaired base. The complementary strand guanine functions in substrate recognition. Required for DNA damage lesion repair in stationary-phase cells. The chain is G/U mismatch-specific DNA glycosylase from Shigella dysenteriae serotype 1 (strain Sd197).